The primary structure comprises 128 residues: Transcription antitermination protein NusB (128 aa).

It belongs to the NusB family.

Its function is as follows. Involved in transcription antitermination. Required for transcription of ribosomal RNA (rRNA) genes. Binds specifically to the boxA antiterminator sequence of the ribosomal RNA (rrn) operons. The polypeptide is Transcription antitermination protein NusB (Listeria monocytogenes serotype 4b (strain CLIP80459)).